The following is a 198-amino-acid chain: Probable GTP-binding protein EngB (198 aa).

In terms of domain architecture, EngB-type G spans 21–195 (NFSEVAFLGR…EDIIINQTLG (175 aa)). Residues 29–36 (GRSNVGKS), 56–60 (GKTQL), 81–84 (DLPG), 151–154 (TKCD), and 174–176 (VSN) contribute to the GTP site. Residues serine 36 and threonine 58 each coordinate Mg(2+).

This sequence belongs to the TRAFAC class TrmE-Era-EngA-EngB-Septin-like GTPase superfamily. EngB GTPase family. It depends on Mg(2+) as a cofactor.

Functionally, necessary for normal cell division and for the maintenance of normal septation. This is Probable GTP-binding protein EngB from Campylobacter jejuni (strain RM1221).